Here is a 336-residue protein sequence, read N- to C-terminus: Dihydroorotate dehydrogenase (quinone) (336 aa).

Residues 62 to 66 (AGLEK) and T86 contribute to the FMN site. K66 serves as a coordination point for substrate. A substrate-binding site is contributed by 111-115 (NRMGF). Residues N139 and N172 each coordinate FMN. N172 provides a ligand contact to substrate. S175 (nucleophile) is an active-site residue. Residue N177 coordinates substrate. Residues K217 and T245 each contribute to the FMN site. 246–247 (NT) lines the substrate pocket. Residues G268, G297, and 318–319 (YS) contribute to the FMN site.

It belongs to the dihydroorotate dehydrogenase family. Type 2 subfamily. Monomer. The cofactor is FMN.

The protein resides in the cell membrane. It carries out the reaction (S)-dihydroorotate + a quinone = orotate + a quinol. Its pathway is pyrimidine metabolism; UMP biosynthesis via de novo pathway; orotate from (S)-dihydroorotate (quinone route): step 1/1. Functionally, catalyzes the conversion of dihydroorotate to orotate with quinone as electron acceptor. The sequence is that of Dihydroorotate dehydrogenase (quinone) from Aliivibrio salmonicida (strain LFI1238) (Vibrio salmonicida (strain LFI1238)).